The sequence spans 334 residues: Siroheme decarboxylase (334 aa).

Residue His-93 is part of the active site.

It belongs to the Ahb/Nir family.

It carries out the reaction siroheme + 2 H(+) = 12,18-didecarboxysiroheme + 2 CO2. It functions in the pathway porphyrin-containing compound metabolism. Its function is as follows. Involved in heme d1 biosynthesis. Catalyzes the decarboxylation of siroheme into didecarboxysiroheme. Siroheme is probably decarboxylated to monodecarboxysiroheme, which is in turn decarboxylated to didecarboxysiroheme. This is Siroheme decarboxylase from Hydrogenobacter thermophilus (strain DSM 6534 / IAM 12695 / TK-6).